The primary structure comprises 248 residues: MKILLTNDDGVHSPGLAALIKKVSEVAEVVVVAPDREQSAVSHALTLHHPLRAARIRANVFSVEGTPTDCVNLGIHSLLSYRPDLVISGVNRGANIADDVTYSGTVAAALEATLMGIPAIAVSLVTRSAGEHFEAAAACAAKLAVTVHQKGLPRDTYLNVNVPDLPAESLLPPLITCQGKRSYEGTIVDKVDPRGRNYYWIGTTDLSFEDIPGTDYHAVSRGHVSISPLHIDLTNHASIETLKSWELP.

A divalent metal cation contacts are provided by Asp-8, Asp-9, Ser-39, and Asn-91.

Belongs to the SurE nucleotidase family. It depends on a divalent metal cation as a cofactor.

It is found in the cytoplasm. The enzyme catalyses a ribonucleoside 5'-phosphate + H2O = a ribonucleoside + phosphate. Nucleotidase that shows phosphatase activity on nucleoside 5'-monophosphates. This is 5'-nucleotidase SurE from Geobacter sp. (strain M21).